Reading from the N-terminus, the 772-residue chain is Phosphoribosylformylglycinamidine synthase subunit PurL (772 aa).

His62 is an active-site residue. ATP is bound by residues Tyr65 and Lys109. Glu111 is a binding site for Mg(2+). Residues 112–115 and Arg134 each bind substrate; that span reads SHNH. The active-site Proton acceptor is His113. Position 135 (Asp135) interacts with Mg(2+). Residue Gln259 participates in substrate binding. A Mg(2+)-binding site is contributed by Asp287. 331–333 provides a ligand contact to substrate; sequence ESQ. Residues Asp519 and Gly556 each coordinate ATP. Asn557 serves as a coordination point for Mg(2+). Ser559 is a substrate binding site.

This sequence belongs to the FGAMS family. As to quaternary structure, monomer. Part of the FGAM synthase complex composed of 1 PurL, 1 PurQ and 2 PurS subunits.

The protein resides in the cytoplasm. It carries out the reaction N(2)-formyl-N(1)-(5-phospho-beta-D-ribosyl)glycinamide + L-glutamine + ATP + H2O = 2-formamido-N(1)-(5-O-phospho-beta-D-ribosyl)acetamidine + L-glutamate + ADP + phosphate + H(+). It participates in purine metabolism; IMP biosynthesis via de novo pathway; 5-amino-1-(5-phospho-D-ribosyl)imidazole from N(2)-formyl-N(1)-(5-phospho-D-ribosyl)glycinamide: step 1/2. Its function is as follows. Part of the phosphoribosylformylglycinamidine synthase complex involved in the purines biosynthetic pathway. Catalyzes the ATP-dependent conversion of formylglycinamide ribonucleotide (FGAR) and glutamine to yield formylglycinamidine ribonucleotide (FGAM) and glutamate. The FGAM synthase complex is composed of three subunits. PurQ produces an ammonia molecule by converting glutamine to glutamate. PurL transfers the ammonia molecule to FGAR to form FGAM in an ATP-dependent manner. PurS interacts with PurQ and PurL and is thought to assist in the transfer of the ammonia molecule from PurQ to PurL. The chain is Phosphoribosylformylglycinamidine synthase subunit PurL from Leifsonia xyli subsp. xyli (strain CTCB07).